A 56-amino-acid polypeptide reads, in one-letter code: Putative zinc-binding protein YnfU (56 aa).

The Zn(2+) site is built by Cys-19, Cys-22, Cys-41, and Cys-44.

Zn(2+) is required as a cofactor.

This chain is Putative zinc-binding protein YnfU, found in Escherichia coli (strain K12).